A 1023-amino-acid polypeptide reads, in one-letter code: uncharacterized protein (1023 aa).

Residues 1-35 (MAEKRPLGPLGPMMYGKLPRLEPDPGPGHSLPLSA) are disordered. Lys-17 carries the N6-acetyllysine modification. Residues Ser-206 and Ser-383 each carry the phosphoserine modification. Disordered regions lie at residues 381 to 501 (GASP…PVID), 518 to 551 (PEPRAERDSAPATSKSQDKDCKGNLPAQDGASRS), 703 to 742 (PAPASAPPPSPAPAPAPASGPAPSSAQVPTAAPVDSPEQH), 907 to 980 (EART…TLRA), and 1002 to 1023 (KASGADRSSPHPQLLGSQTHHL). Position 389 is a phosphothreonine (Thr-389). The segment covering 391–400 (PSHSQNSVQP) has biased composition (polar residues). 3 stretches are compositionally biased toward basic and acidic residues: residues 425-436 (RPAEKPTPEAQE), 443-454 (CRKEQLQPRPNE), and 477-490 (CAKERQSVPQKDAR). 2 positions are modified to phosphoserine: Ser-493 and Ser-494. Residues 706–722 (ASAPPPSPAPAPAPASG) are compositionally biased toward pro residues. Phosphoserine is present on residues Ser-912, Ser-964, and Ser-972. Residues 963-972 (PSPSSGASTS) show a composition bias toward low complexity.

This is an uncharacterized protein from Mus musculus (Mouse).